The primary structure comprises 614 residues: UvrABC system protein C (614 aa).

The region spanning 12-91 (ESPGVYLMKG…IKKHRPRYNL (80 aa)) is the GIY-YIG domain. The UVR domain occupies 201–236 (RDLLKTYRERMASAAANERYEEAARYRDLIRAIEVT).

This sequence belongs to the UvrC family. Interacts with UvrB in an incision complex.

The protein resides in the cytoplasm. The UvrABC repair system catalyzes the recognition and processing of DNA lesions. UvrC both incises the 5' and 3' sides of the lesion. The N-terminal half is responsible for the 3' incision and the C-terminal half is responsible for the 5' incision. The protein is UvrABC system protein C of Geobacter metallireducens (strain ATCC 53774 / DSM 7210 / GS-15).